The sequence spans 398 residues: Protochlorophyllide reductase, chloroplastic (398 aa).

Residues 1 to 64 constitute a chloroplast transit peptide; sequence MALQAASLVS…NQQIGAIRAQ (64 aa).

It belongs to the short-chain dehydrogenases/reductases (SDR) family. POR subfamily.

It is found in the plastid. The protein resides in the chloroplast. The enzyme catalyses chlorophyllide a + NADP(+) = protochlorophyllide a + NADPH + H(+). It participates in porphyrin-containing compound metabolism; chlorophyll biosynthesis. In terms of biological role, phototransformation of protochlorophyllide (Pchlide) to chlorophyllide (Chlide). The protein is Protochlorophyllide reductase, chloroplastic (PORA) of Cucumis sativus (Cucumber).